A 56-amino-acid chain; its full sequence is Repressor-like protein SSo7c4 (56 aa).

Residues 4–51 enclose the SpoVT-AbrB domain; the sequence is EEIVKVSRNYQVTIPAKVRQKFQIKEGDLVKVTFDESGGVVKIQLLDS.

In Saccharolobus solfataricus (strain ATCC 35092 / DSM 1617 / JCM 11322 / P2) (Sulfolobus solfataricus), this protein is Repressor-like protein SSo7c4.